The sequence spans 334 residues: Ornithine carbamoyltransferase (334 aa).

Carbamoyl phosphate is bound by residues 57–60 (STRT), Gln84, Arg108, and 135–138 (HPTQ). Residues Asn169, Asp233, and 237 to 238 (SM) contribute to the L-ornithine site. Carbamoyl phosphate contacts are provided by residues 275–276 (CL) and Arg320.

It belongs to the aspartate/ornithine carbamoyltransferase superfamily. OTCase family.

The protein localises to the cytoplasm. The catalysed reaction is carbamoyl phosphate + L-ornithine = L-citrulline + phosphate + H(+). The protein operates within amino-acid biosynthesis; L-arginine biosynthesis; L-arginine from L-ornithine and carbamoyl phosphate: step 1/3. Reversibly catalyzes the transfer of the carbamoyl group from carbamoyl phosphate (CP) to the N(epsilon) atom of ornithine (ORN) to produce L-citrulline. The chain is Ornithine carbamoyltransferase from Aliivibrio fischeri (strain ATCC 700601 / ES114) (Vibrio fischeri).